We begin with the raw amino-acid sequence, 161 residues long: Putative allophycocyanin subunit alpha 2 (161 aa).

N4-methylasparagine is present on Asn-71. Position 81 (Cys-81) interacts with (2R,3E)-phycocyanobilin.

It belongs to the phycobiliprotein family. In terms of assembly, heterohexamer of two alpha chains, one alpha-B chain and three beta chains. In terms of processing, contains one covalently linked phycocyanobilin chromophore. The chromophore is added by phycocyanobilin lyase CpcS 1.

Its subcellular location is the cellular thylakoid membrane. Light-harvesting photosynthetic bile pigment-protein from the phycobiliprotein complex. Allophycocyanin has a maximum absorption at approximately 650 to 653 nanometers. The chain is Putative allophycocyanin subunit alpha 2 (apcA2) from Nostoc sp. (strain PCC 7120 / SAG 25.82 / UTEX 2576).